The sequence spans 237 residues: MVARLTAFLVCLVFSLATLVQRGYGDTDGFNLEDALKETSSVKQRWDHFSTTTRRPVTTRAPANPAERWDHVATTTTRRPGTTRAPSNPMELDGFDLEDALDDRNDLDGPKKPSAGEAGGWSDKDLEDIVEGGGYKPDKNKGGGGYGSNDDPGSGISTETGTIAGVASALAMALIGAVSSYISYQQKKFCFSIQQGLNADYVKGENLEAVVCEEPQVTYSKQETQSAEPPPPEPPRI.

The signal sequence occupies residues 1-25; it reads MVARLTAFLVCLVFSLATLVQRGYG. Topologically, residues 26–161 are extracellular; it reads DTDGFNLEDA…PGSGISTETG (136 aa). The tract at residues 47–157 is disordered; it reads DHFSTTTRRP…SNDDPGSGIS (111 aa). Composition is skewed to low complexity over residues 51 to 66 and 74 to 84; these read TTTRRPVTTRAPANPA and TTTTRRPGTTR. The segment covering 102-111 has biased composition (basic and acidic residues); sequence DDRNDLDGPK. An O-linked (Xyl...) (chondroitin sulfate) serine glycan is attached at Ser154. A helical transmembrane segment spans residues 162–182; the sequence is TIAGVASALAMALIGAVSSYI. At 183–237 the chain is on the cytoplasmic side; it reads SYQQKKFCFSIQQGLNADYVKGENLEAVVCEEPQVTYSKQETQSAEPPPPEPPRI. Polar residues predominate over residues 218–227; it reads TYSKQETQSA. Residues 218–237 form a disordered region; the sequence is TYSKQETQSAEPPPPEPPRI. A compositionally biased stretch (pro residues) spans 228 to 237; it reads EPPPPEPPRI.

Belongs to the CD99 family. In terms of processing, O-glycosylated. As to expression, highly expressed in the nervous system, including brain, dentate nucleus of hippocampus, granular and Purkinje cells of cerebellum, brain stem nucleus and choroid plexus. Expressed in peripheral blood T- and B-cells and neutrophils (at protein level). Almost undetectable in bone marrow-derived neutrophils (at protein level). Also expressed in thymocytes (at protein level) with higher expression in cortical thymocytes than in medullary thymocytes. Expressed at high levels in testis (mostly in germ cells and Sertoli cells) and ovary (mostly in granulosa cells). Expressed in lung, heart, kidney and liver (at protein level); however, expression in heart, kidney and liver seems restricted to endothelial cells (at protein level). Highly expressed in endothelial cells and to a lower level in vascular smooth muscle cells (at protein level). Low expression in spleen.

It is found in the cell membrane. Its subcellular location is the cell junction. The protein localises to the secreted. Its function is as follows. Plays a role in a late step of leukocyte extravasation helping cells to overcome the endothelial basement membrane. Acts at the same site as, but independently of, PECAM1. Homophilic adhesion molecule, but these interactions may not be required for cell aggregation. The polypeptide is CD99 antigen-like protein 2 (Cd99l2) (Mus musculus (Mouse)).